Here is a 105-residue protein sequence, read N- to C-terminus: Large ribosomal subunit protein uL24 (105 aa).

This sequence belongs to the universal ribosomal protein uL24 family. In terms of assembly, part of the 50S ribosomal subunit.

Functionally, one of two assembly initiator proteins, it binds directly to the 5'-end of the 23S rRNA, where it nucleates assembly of the 50S subunit. One of the proteins that surrounds the polypeptide exit tunnel on the outside of the subunit. This chain is Large ribosomal subunit protein uL24, found in Anaplasma marginale (strain St. Maries).